The chain runs to 229 residues: Secretory carrier-associated membrane protein 4 (229 aa).

Topologically, residues 1–39 (MSEKENNFPPLPKFIPVKPCFYQNFSDEIPVEHQVLVKR) are cytoplasmic. The next 4 membrane-spanning stretches (helical) occupy residues 40–60 (IYRL…ACLA), 61–81 (WWIG…LLLF), 105–125 (FMAF…QAIG), and 149–169 (VVML…AIAI). The Cytoplasmic portion of the chain corresponds to 170–229 (MKVHRIYRGAGGSFQKAQTEWNTGTWRNPPSREAQYNNFSGNSLPEYPTVPSYPGSGQWP). Thr-194 is subject to Phosphothreonine. The interval 208–229 (FSGNSLPEYPTVPSYPGSGQWP) is disordered.

It belongs to the SCAMP family.

It is found in the membrane. Its function is as follows. Probably involved in membrane protein trafficking. This chain is Secretory carrier-associated membrane protein 4 (SCAMP4), found in Pongo abelii (Sumatran orangutan).